A 510-amino-acid chain; its full sequence is ATP synthase subunit alpha (510 aa).

169 to 176 (GDRQTGKT) contributes to the ATP binding site.

Belongs to the ATPase alpha/beta chains family. In terms of assembly, F-type ATPases have 2 components, CF(1) - the catalytic core - and CF(0) - the membrane proton channel. CF(1) has five subunits: alpha(3), beta(3), gamma(1), delta(1), epsilon(1). CF(0) has four main subunits: a(1), b(1), b'(1) and c(9-12).

It localises to the cell inner membrane. It catalyses the reaction ATP + H2O + 4 H(+)(in) = ADP + phosphate + 5 H(+)(out). Functionally, produces ATP from ADP in the presence of a proton gradient across the membrane. The alpha chain is a regulatory subunit. This Rhodopseudomonas palustris (strain BisA53) protein is ATP synthase subunit alpha.